The primary structure comprises 429 residues: Trigger factor (429 aa).

The 86-residue stretch at 161 to 246 (GDRLSIDFKG…INEVALPKEP (86 aa)) folds into the PPIase FKBP-type domain.

The protein belongs to the FKBP-type PPIase family. Tig subfamily.

Its subcellular location is the cytoplasm. It catalyses the reaction [protein]-peptidylproline (omega=180) = [protein]-peptidylproline (omega=0). Its function is as follows. Involved in protein export. Acts as a chaperone by maintaining the newly synthesized protein in an open conformation. Functions as a peptidyl-prolyl cis-trans isomerase. The protein is Trigger factor of Ruthia magnifica subsp. Calyptogena magnifica.